A 585-amino-acid polypeptide reads, in one-letter code: Proline--tRNA ligase (585 aa).

The protein belongs to the class-II aminoacyl-tRNA synthetase family. ProS type 1 subfamily. Homodimer.

Its subcellular location is the cytoplasm. It catalyses the reaction tRNA(Pro) + L-proline + ATP = L-prolyl-tRNA(Pro) + AMP + diphosphate. Functionally, catalyzes the attachment of proline to tRNA(Pro) in a two-step reaction: proline is first activated by ATP to form Pro-AMP and then transferred to the acceptor end of tRNA(Pro). As ProRS can inadvertently accommodate and process non-cognate amino acids such as alanine and cysteine, to avoid such errors it has two additional distinct editing activities against alanine. One activity is designated as 'pretransfer' editing and involves the tRNA(Pro)-independent hydrolysis of activated Ala-AMP. The other activity is designated 'posttransfer' editing and involves deacylation of mischarged Ala-tRNA(Pro). The misacylated Cys-tRNA(Pro) is not edited by ProRS. The chain is Proline--tRNA ligase from Mycolicibacterium vanbaalenii (strain DSM 7251 / JCM 13017 / BCRC 16820 / KCTC 9966 / NRRL B-24157 / PYR-1) (Mycobacterium vanbaalenii).